The chain runs to 394 residues: Protein arginine N-methyltransferase 8 (394 aa).

The N-myristoyl glycine moiety is linked to residue G2. The interval 21-40 is disordered; that stretch reads VESTEVSSAPPQPPQPVIPA. Short sequence motifs (SH3-binding) lie at residues 29 to 42 and 53 to 58; these read APPQPPQPVIPAKP and PSCPGR. Residues 30–39 are compositionally biased toward pro residues; the sequence is PPQPPQPVIP. R58 carries the post-translational modification Omega-N-methylarginine; by PRMT8. R73 is subject to Asymmetric dimethylarginine; by PRMT8. The 322-residue stretch at 73–394 folds into the SAM-dependent MTase PRMT-type domain; it reads RDYYFDSYAH…TSVSNDYKMR (322 aa). S-adenosyl-L-methionine is bound by residues H86, R95, G119, 119 to 122, E141, and E170; that span reads GSGT. Residues E185 and E194 contribute to the active site.

It belongs to the class I-like SAM-binding methyltransferase superfamily. Protein arginine N-methyltransferase family. PRMT8 subfamily. Homodimer. Tetramer; individual homodimers associates to form a homotetramer. Homooctamer; individual homodimers associates to form a homooctamer and homooligomerization is required for proper localization to the cell membrane. Heterodimer with PRMT1; heterodimerization may recruit PRMT1 activity to the plasma membrane. Interacts with PRMT2 (via the SH3 domain). Interacts with FYN (via the SH3 domain). Interacts with EWS; independently of EWS methylation status. In terms of tissue distribution, brain-specific. Only expressed in neurons, especially in the somatosensory and limbic systems, and a part of motor system. Highly expressed in all of the regions related to general somatosensory system. Expressed in most of the relay nuclei intervening the special somatosensory system, such as the auditory, visual and vestibular systems. Also present in forebrain limbic areas and thalamic nuclei relevant to limbic areas and in areas related to the motor system, such as the caudate putamen, Purkinje cells, inferior olivary nucleus and cerebellar nuclei.

It is found in the cell membrane. It catalyses the reaction L-arginyl-[protein] + S-adenosyl-L-methionine = N(omega)-methyl-L-arginyl-[protein] + S-adenosyl-L-homocysteine + H(+). It carries out the reaction L-arginyl-[protein] + 2 S-adenosyl-L-methionine = N(omega),N(omega)-dimethyl-L-arginyl-[protein] + 2 S-adenosyl-L-homocysteine + 2 H(+). In terms of biological role, S-adenosyl-L-methionine-dependent and membrane-associated arginine methyltransferase that can both catalyze the formation of omega-N monomethylarginine (MMA) and asymmetrical dimethylarginine (aDMA) in proteins such as NIFK, myelin basic protein, histone H4, H2A and H2A/H2B dimer. Able to mono- and dimethylate EWS protein; however its precise role toward EWS remains unclear as it still interacts with fully methylated EWS. This chain is Protein arginine N-methyltransferase 8, found in Mus musculus (Mouse).